The following is a 325-amino-acid chain: Ribosomal RNA small subunit methyltransferase H (325 aa).

S-adenosyl-L-methionine contacts are provided by residues 32–34 (GGH), D52, F79, D100, and Q107.

This sequence belongs to the methyltransferase superfamily. RsmH family.

Its subcellular location is the cytoplasm. It catalyses the reaction cytidine(1402) in 16S rRNA + S-adenosyl-L-methionine = N(4)-methylcytidine(1402) in 16S rRNA + S-adenosyl-L-homocysteine + H(+). Functionally, specifically methylates the N4 position of cytidine in position 1402 (C1402) of 16S rRNA. The polypeptide is Ribosomal RNA small subunit methyltransferase H (Oceanobacillus iheyensis (strain DSM 14371 / CIP 107618 / JCM 11309 / KCTC 3954 / HTE831)).